The sequence spans 338 residues: Inositol 2-dehydrogenase 3 (338 aa).

This sequence belongs to the Gfo/Idh/MocA family. In terms of assembly, homotetramer.

The catalysed reaction is myo-inositol + NAD(+) = scyllo-inosose + NADH + H(+). Involved in the oxidation of myo-inositol (MI) to 2-keto-myo-inositol (2KMI or 2-inosose). This is Inositol 2-dehydrogenase 3 from Saccharopolyspora erythraea (strain ATCC 11635 / DSM 40517 / JCM 4748 / NBRC 13426 / NCIMB 8594 / NRRL 2338).